A 318-amino-acid polypeptide reads, in one-letter code: Ribosomal protein L11 methyltransferase (318 aa).

S-adenosyl-L-methionine contacts are provided by Thr159, Gly180, Asp202, and Asn253.

This sequence belongs to the methyltransferase superfamily. PrmA family.

Its subcellular location is the cytoplasm. The catalysed reaction is L-lysyl-[protein] + 3 S-adenosyl-L-methionine = N(6),N(6),N(6)-trimethyl-L-lysyl-[protein] + 3 S-adenosyl-L-homocysteine + 3 H(+). Methylates ribosomal protein L11. The sequence is that of Ribosomal protein L11 methyltransferase from Lachnospira eligens (strain ATCC 27750 / DSM 3376 / VPI C15-48 / C15-B4) (Eubacterium eligens).